Consider the following 492-residue polypeptide: Fibroblast growth factor receptor substrate 3 (492 aa).

Gly2 carries the N-myristoyl glycine lipid modification. The 103-residue stretch at 13–115 (VPHNHPTKFK…QCNSINVTEE (103 aa)) folds into the IRS-type PTB domain. Disordered stretches follow at residues 125–205 (PQEL…EDRR), 337–413 (QQLR…EPPR), and 425–492 (WGTA…DLPL). 2 stretches are compositionally biased toward polar residues: residues 133–147 (GSSQPTGYTVSSFSN) and 166–185 (PSTSSLRHPSPGEESTQTLI). Positions 374–385 (TSTRASARSHSS) are enriched in low complexity.

Binds NTRK1, FGFR1, NGFR, GRB2, PTPN11 and ERK2. Phosphorylated on tyrosine residues upon stimulation by BFGF or NGFB.

The protein localises to the membrane. Functionally, adapter protein that links FGF and NGF receptors to downstream signaling pathways. Involved in the activation of MAP kinases. Down-regulates ERK2 signaling by interfering with the phosphorylation and nuclear translocation of ERK2. This Rattus norvegicus (Rat) protein is Fibroblast growth factor receptor substrate 3 (Frs3).